A 539-amino-acid chain; its full sequence is GMP synthase [glutamine-hydrolyzing] (539 aa).

Residues 4 to 202 (KILILDFGSQ…VLGICRAKAD (199 aa)) form the Glutamine amidotransferase type-1 domain. Cysteine 81 serves as the catalytic Nucleophile. Residues histidine 176 and glutamate 178 contribute to the active site. Residues 203 to 395 (WVMKDHIEEA…LGLPPEMVYR (193 aa)) enclose the GMPS ATP-PPase domain. 230-236 (SGGVDSS) provides a ligand contact to ATP.

As to quaternary structure, homodimer.

It carries out the reaction XMP + L-glutamine + ATP + H2O = GMP + L-glutamate + AMP + diphosphate + 2 H(+). It functions in the pathway purine metabolism; GMP biosynthesis; GMP from XMP (L-Gln route): step 1/1. Functionally, catalyzes the synthesis of GMP from XMP. The polypeptide is GMP synthase [glutamine-hydrolyzing] (Cupriavidus pinatubonensis (strain JMP 134 / LMG 1197) (Cupriavidus necator (strain JMP 134))).